The following is a 497-amino-acid chain: 3-octaprenyl-4-hydroxybenzoate carboxy-lyase (497 aa).

Mn(2+) is bound at residue Asn172. Prenylated FMN contacts are provided by residues 175–177, 189–191, and 194–195; these read IYR, RWL, and RG. Position 238 (Glu238) interacts with Mn(2+). Asp287 acts as the Proton donor in catalysis.

Belongs to the UbiD family. Homohexamer. Requires prenylated FMN as cofactor. It depends on Mn(2+) as a cofactor.

The protein localises to the cell membrane. The enzyme catalyses a 4-hydroxy-3-(all-trans-polyprenyl)benzoate + H(+) = a 2-(all-trans-polyprenyl)phenol + CO2. Its pathway is cofactor biosynthesis; ubiquinone biosynthesis. Its function is as follows. Catalyzes the decarboxylation of 3-octaprenyl-4-hydroxy benzoate to 2-octaprenylphenol, an intermediate step in ubiquinone biosynthesis. This is 3-octaprenyl-4-hydroxybenzoate carboxy-lyase from Enterobacter sp. (strain 638).